Reading from the N-terminus, the 207-residue chain is Peptidyl-tRNA hydrolase (207 aa).

Position 17 (Tyr-17) interacts with tRNA. His-22 acts as the Proton acceptor in catalysis. Positions 68, 70, and 116 each coordinate tRNA.

It belongs to the PTH family. Monomer.

The protein resides in the cytoplasm. The enzyme catalyses an N-acyl-L-alpha-aminoacyl-tRNA + H2O = an N-acyl-L-amino acid + a tRNA + H(+). In terms of biological role, hydrolyzes ribosome-free peptidyl-tRNAs (with 1 or more amino acids incorporated), which drop off the ribosome during protein synthesis, or as a result of ribosome stalling. Catalyzes the release of premature peptidyl moieties from peptidyl-tRNA molecules trapped in stalled 50S ribosomal subunits, and thus maintains levels of free tRNAs and 50S ribosomes. This chain is Peptidyl-tRNA hydrolase, found in Buchnera aphidicola subsp. Baizongia pistaciae (strain Bp).